The following is a 206-amino-acid chain: Thymidylate kinase (206 aa).

Residue 11-18 (GIDGAGKT) participates in ATP binding.

Belongs to the thymidylate kinase family.

The enzyme catalyses dTMP + ATP = dTDP + ADP. In terms of biological role, phosphorylation of dTMP to form dTDP in both de novo and salvage pathways of dTTP synthesis. The protein is Thymidylate kinase of Burkholderia thailandensis (strain ATCC 700388 / DSM 13276 / CCUG 48851 / CIP 106301 / E264).